The primary structure comprises 293 residues: PHD finger protein 11A (293 aa).

A C2HC pre-PHD-type zinc finger spans residues 25–61 (KRTCALCPEGHEWSQIYFSPSANIVAHENCLLYSSGL). A PHD-type; degenerate zinc finger spans residues 91 to 143 (LKCSFCKNKGATMGYDLQSCTKNYHLSCAMEDHAILQVDEDHGTYKLFCQKHA). The tract at residues 262 to 293 (SSSTSGSLLPPEDHQVRCQESPEVQAGSGDSL) is disordered.

The protein resides in the nucleus. The protein is PHD finger protein 11A (Phf11a) of Mus musculus (Mouse).